A 354-amino-acid chain; its full sequence is AT-hook motif nuclear-localized protein 11 (354 aa).

2 disordered regions span residues 1 to 158 and 290 to 354; these read MDRR…MMPS and KREE…LMRG. Low complexity-rich tracts occupy residues 46-55 and 75-96; these read NSISPFGSNP and VDSS…PPSG. A Bipartite nuclear localization signal motif is present at residues 101–109; sequence KRKRGRPRK. The a.T hook 1 DNA-binding region spans 101–113; it reads KRKRGRPRKYGQD. Low complexity predominate over residues 122 to 133; sequence SPSISNVSPNSN. The segment at residues 134–146 is a DNA-binding region (a.T hook 2); it reads KRGRGRPPGSGKK. Residues 159-302 form the PPC domain; that stretch reads STGMSFTPHV…ETSEDVQDTD (144 aa). Acidic residues predominate over residues 294–303; sequence TSEDVQDTDA. Residues 304–327 show a composition bias toward polar residues; the sequence is LENNNDNTAATSPPVPQQSQNIVQ. Positions 340 to 354 are enriched in basic and acidic residues; that stretch reads MDMHHPHMDIDLMRG.

It localises to the nucleus. In terms of biological role, transcription factor that specifically binds AT-rich DNA sequences related to the nuclear matrix attachment regions (MARs). This chain is AT-hook motif nuclear-localized protein 11, found in Arabidopsis thaliana (Mouse-ear cress).